A 133-amino-acid chain; its full sequence is Transmembrane protein 60 (133 aa).

4 helical membrane passes run 5 to 25 (LAQR…MLVL), 35 to 55 (WFLI…MLIV), 78 to 98 (AWYL…CAKL), and 110 to 130 (FIPL…NVFF).

It localises to the membrane. The chain is Transmembrane protein 60 (Tmem60) from Mus musculus (Mouse).